The chain runs to 266 residues: MDNRPIGVLDSGLGGLTVLKKVIEKMPNESTIFIGDQANMPYGDRSREEIISLTRDSVNFLLSKDVKIIIFGCNTATAVAMATIQKEIPLQIIGVVQSGALAAARTTETKNVAVIGTKATVASHSYLKEIQYRDPEIKVSEFAQPKLAPLAEEDPDEDTKNAVVSESLTPLKNADYDTLVLGCTHYPLLRDEIVAVVGQDKKIVDPADQVAQYTYNVLRRDDLFAESTAPVKHDYYTTGEAKKFTEITRQWMNDDTIVGHHVDAED.

Substrate contacts are provided by residues Asp10–Ser11 and Tyr42–Gly43. Catalysis depends on Cys73, which acts as the Proton donor/acceptor. Asn74–Thr75 contributes to the substrate binding site. Catalysis depends on Cys183, which acts as the Proton donor/acceptor. Position 184–185 (Thr184–His185) interacts with substrate.

Belongs to the aspartate/glutamate racemases family.

The catalysed reaction is L-glutamate = D-glutamate. Its pathway is cell wall biogenesis; peptidoglycan biosynthesis. Provides the (R)-glutamate required for cell wall biosynthesis. The sequence is that of Glutamate racemase from Lactobacillus johnsonii (strain CNCM I-12250 / La1 / NCC 533).